Here is a 156-residue protein sequence, read N- to C-terminus: Ribonuclease 1B pancreatic (156 aa).

Residues 1–28 form the signal peptide; it reads MALDKSVIPLPLLVVVLLVLGWAQPSLG. Residues K35 and R38 each contribute to the substrate site. H40 serves as the catalytic Proton acceptor. Intrachain disulfides connect C54–C112, C68–C123, C86–C138, and C93–C100. N62 is a glycosylation site (N-linked (GlcNAc...) asparagine). Substrate contacts are provided by residues 69 to 73, K94, and R113; that span reads KSVNT. The N-linked (GlcNAc...) asparagine glycan is linked to N116. The active-site Proton donor is H147.

It belongs to the pancreatic ribonuclease family. In terms of assembly, monomer.

The protein resides in the secreted. It catalyses the reaction an [RNA] containing cytidine + H2O = an [RNA]-3'-cytidine-3'-phosphate + a 5'-hydroxy-ribonucleotide-3'-[RNA].. The catalysed reaction is an [RNA] containing uridine + H2O = an [RNA]-3'-uridine-3'-phosphate + a 5'-hydroxy-ribonucleotide-3'-[RNA].. Functionally, endonuclease that catalyzes the cleavage of RNA on the 3' side of pyrimidine nucleotides. Compared to RNASE1 it has lost activity towards dsRNA. This chain is Ribonuclease 1B pancreatic (RNASE1B), found in Pygathrix nemaeus (Red-shanked douc langur).